A 154-amino-acid chain; its full sequence is MHPQRKQRLMIVLFIVVFSSLAVGLIAYALRENINLFYPPSKIAAGDVPHNTRIRAGGCVKPGSVVRSQENLDVRFVITDGNADVVVSYTGILPDLFAEGEAAVINGIVTEAGDIQASEVLAKHDETYMPPEVAEAMKGKGQHQATCGGLNYGA.

Over 1–8 (MHPQRKQR) the chain is Cytoplasmic. The chain crosses the membrane as a helical; Signal-anchor for type II membrane protein span at residues 9–29 (LMIVLFIVVFSSLAVGLIAYA). Residues 30–154 (LRENINLFYP…ATCGGLNYGA (125 aa)) are Periplasmic-facing. Residues H124 and Y128 each coordinate heme.

The protein belongs to the CcmE/CycJ family.

The protein localises to the cell inner membrane. Heme chaperone required for the biogenesis of c-type cytochromes. Transiently binds heme delivered by CcmC and transfers the heme to apo-cytochromes in a process facilitated by CcmF and CcmH. This chain is Cytochrome c-type biogenesis protein CcmE, found in Cellvibrio japonicus (strain Ueda107) (Pseudomonas fluorescens subsp. cellulosa).